We begin with the raw amino-acid sequence, 336 residues long: Dihydroorotate dehydrogenase (quinone) (336 aa).

Residues 62-66 (AGLDK) and Thr86 contribute to the FMN site. Lys66 provides a ligand contact to substrate. 111–115 (NRMGF) serves as a coordination point for substrate. Asn139 and Asn172 together coordinate FMN. Asn172 contacts substrate. Ser175 acts as the Nucleophile in catalysis. Position 177 (Asn177) interacts with substrate. FMN is bound by residues Lys217 and Thr245. 246–247 (NT) contributes to the substrate binding site. FMN contacts are provided by residues Gly268, Gly297, and 318-319 (YS).

The protein belongs to the dihydroorotate dehydrogenase family. Type 2 subfamily. In terms of assembly, monomer. The cofactor is FMN.

The protein localises to the cell membrane. The enzyme catalyses (S)-dihydroorotate + a quinone = orotate + a quinol. It participates in pyrimidine metabolism; UMP biosynthesis via de novo pathway; orotate from (S)-dihydroorotate (quinone route): step 1/1. Functionally, catalyzes the conversion of dihydroorotate to orotate with quinone as electron acceptor. The protein is Dihydroorotate dehydrogenase (quinone) of Serratia proteamaculans (strain 568).